The following is a 518-amino-acid chain: Centromere protein T (518 aa).

Residues 1–70 form a disordered region; the sequence is MADLSSPDGD…RKHSHGTGSV (70 aa). Positions 19-28 are enriched in basic and acidic residues; the sequence is HVLDTADSHT. Over residues 34–57 the composition is skewed to polar residues; that stretch reads STQTNPQRRRSQTPYSKRQGSQRK. Residue threonine 86 is modified to Phosphothreonine. Residues 94–381 form a flexible stalk domain region; that stretch reads ILLTAPESST…EPHQLFEPPP (288 aa). 3 disordered regions span residues 102–156, 271–362, and 375–412; these read STVM…KRKQ, VHHS…ELSS, and QLFE…HQDP. Positions 294-306 are enriched in polar residues; sequence TPSTGTRPQSQMS. Phosphoserine is present on residues serine 313, serine 324, serine 333, serine 345, serine 346, serine 357, and serine 382. The segment covering 326–343 has biased composition (basic and acidic residues); that stretch reads ELREAVGSKEAEEPKDLE. Positions 384 to 395 are enriched in low complexity; it reads GVAAVSSESVPA.

It belongs to the CENP-T/CNN1 family. In terms of assembly, component of the CENPA-CAD complex, composed of CENPI, CENPK, CENPL, CENPO, CENPP, CENPQ, CENPR and CENPS. The CENPA-CAD complex is probably recruited on centromeres by the CENPA-NAC complex, at least composed of CENPA, CENPC, CENPH, CENPM, CENPN, CENPT and CENPU. Identified in a centromeric complex containing histones H2A, H2B, H3 and H4, and at least CENPA, CENPB, CENPC, CENPT, CENPN, HJURP, SUPT16H, SSRP1 and RSF1. Interacts (via N-terminus) with the NDC80 complex. Heterodimer with CENPW; this dimer coassembles with CENPS-CENPX heterodimers at centromeres to form the tetrameric CENP-T-W-S-X complex. In terms of processing, dynamically phosphorylated during the cell cycle. Phosphorylated during G2 phase, metaphase and anaphase, but not during telophase or G1 phase.

The protein localises to the nucleus. It localises to the chromosome. It is found in the centromere. Its subcellular location is the kinetochore. Functionally, component of the CENPA-NAC (nucleosome-associated) complex, a complex that plays a central role in assembly of kinetochore proteins, mitotic progression and chromosome segregation. The CENPA-NAC complex recruits the CENPA-CAD (nucleosome distal) complex and may be involved in incorporation of newly synthesized CENPA into centromeres. Part of a nucleosome-associated complex that binds specifically to histone H3-containing nucleosomes at the centromere, as opposed to nucleosomes containing CENPA. Component of the heterotetrameric CENP-T-W-S-X complex that binds and supercoils DNA, and plays an important role in kinetochore assembly. CENPT has a fundamental role in kinetochore assembly and function. It is one of the inner kinetochore proteins, with most further proteins binding downstream. Required for normal chromosome organization and normal progress through mitosis. The polypeptide is Centromere protein T (Cenpt) (Rattus norvegicus (Rat)).